The following is a 191-amino-acid chain: MRVLGVDPGSRFMGFGVVEEKRGRLVHVGHGVIKGDPALPLSDRLRDLHGALTAALVKYRPAAVAVEGVFTFRNARSALVLGHARGVALLAAAQAGLPVFEYAPAKVKKAVGAGGADGKDAVARMVRTFLELDASVLERADASDALAVALCHLNHGRAAVPAASASGKKRKGAAALLADRLAPAYRRPEAR.

Active-site residues include Asp-7, Glu-67, and Asp-141. Mg(2+)-binding residues include Asp-7, Glu-67, and Asp-141.

The protein belongs to the RuvC family. As to quaternary structure, homodimer which binds Holliday junction (HJ) DNA. The HJ becomes 2-fold symmetrical on binding to RuvC with unstacked arms; it has a different conformation from HJ DNA in complex with RuvA. In the full resolvosome a probable DNA-RuvA(4)-RuvB(12)-RuvC(2) complex forms which resolves the HJ. The cofactor is Mg(2+).

The protein localises to the cytoplasm. It carries out the reaction Endonucleolytic cleavage at a junction such as a reciprocal single-stranded crossover between two homologous DNA duplexes (Holliday junction).. Its function is as follows. The RuvA-RuvB-RuvC complex processes Holliday junction (HJ) DNA during genetic recombination and DNA repair. Endonuclease that resolves HJ intermediates. Cleaves cruciform DNA by making single-stranded nicks across the HJ at symmetrical positions within the homologous arms, yielding a 5'-phosphate and a 3'-hydroxyl group; requires a central core of homology in the junction. The consensus cleavage sequence is 5'-(A/T)TT(C/G)-3'. Cleavage occurs on the 3'-side of the TT dinucleotide at the point of strand exchange. HJ branch migration catalyzed by RuvA-RuvB allows RuvC to scan DNA until it finds its consensus sequence, where it cleaves and resolves the cruciform DNA. The protein is Crossover junction endodeoxyribonuclease RuvC of Myxococcus xanthus (strain DK1622).